We begin with the raw amino-acid sequence, 241 residues long: Serine protease 58 (241 aa).

Positions 1-17 (MKFILLWALLNLTVALA) are cleaved as a signal peptide. The region spanning 18-239 (FNPDYTVSST…YIPWIENVIQ (222 aa)) is the Peptidase S1 domain. A disulfide bridge connects residues Cys-41 and Cys-57. Catalysis depends on charge relay system residues His-56 and Asp-101. 3 disulfides stabilise this stretch: Cys-133-Cys-201, Cys-165-Cys-180, and Cys-191-Cys-215. Asn-156 and Asn-173 each carry an N-linked (GlcNAc...) asparagine glycan. The active-site Charge relay system is the Ser-195.

The protein belongs to the peptidase S1 family.

It localises to the secreted. The catalysed reaction is Preferential cleavage: Arg-|-Xaa, Lys-|-Xaa.. The sequence is that of Serine protease 58 (PRSS58) from Homo sapiens (Human).